A 1361-amino-acid polypeptide reads, in one-letter code: MRASGRHDVSLKIVLATGCLLLANFSGASSAVATECPDQSPELQPWSPGHNRDYQVHIGHGRKLLLTSSATVHSITISGGGKLVIKDHHEHIVLRTRYILIDDGGELHAGSALCPFEGNFSIVLYGRADENILPDPYYGLKYIGVDKGGTLELHGQKKLSWTFLNKTLHPGGMQEGGYFFERSWGHRGVIVHVIDAKLGTVVHSDRFDTYRSKKESERLVQYLNAVPDGRILSVAVNDEGSRNLDDTARKAMTKLGSKHFLHLGFRHPWSFITVKGNPSSSVEDHIEYHGHKGSAAARVFKLFQTEHGEHFNVSSSSEWVQDVEWTEWFDHDKVPQSKGGEKISDLRAAYPGKICNRPIDIQATTMDGVALSTEVVYKNGQDYRFACYTRGRACRSYRVRFLCGKPVRPKLTVSIDTNVNSTILSLVDNVRSWRPGDTLVVASTDYSMYQAEEFRVLPCKACTSTQVKVAGKPQYLHIGEEIDGVDMRAEVGLLTRNIVVMGEMEDRCYPYTNHICDFFDFDTFGGHIKFALGFKAAHLEGVELKYMGQQLVGQYPIHFHLAGDLDEQGGYDPPTYIRDLSIHHTFSRCITVHGSNGLLIKDVVGYNSLGHCFFTEDGPEERNTFDHCLGLLVKSGTLLPSDRDSRMCKVITEDSYPGYIPKPRQDCNAVSTFWMANPNNNLINCAAAGSEETGFWFIFHHVPTGPSVGMYSPGYSEHIPLGKFYNNRAHSNYRAGMIIDNGVKTTEASAKDKRPFLSIISARYSPHQDADPLKPREPAIIRHFTAYKNQDHGAWLRGGDVWLDSCRFADNGIGLTLASGGTFPYDDGSKQEIKNSLFVGESGNVGTEMMDNRIWGPGGLDHSGRTLPIGQNFPIRGIQFYDGPINIQNCTFRKFAALEGRHTSALAFRLNNAWQSCPHNNVTNIAFEDVPITSRVFFGEPGPWFNQLDMDGDKTSVFHDLDGSVSEYPGSYLTKDDNWLVRHPDCINVPDWRGAICSGRYAQMYIQAYKSSNLRMKIIKNDFPSHPLYLEGALTRSTHYQQYQPVITLQKGYTIHWDQTAPAELAIWLINFNKGDWIRVGLCYPRGTTFSILSDVHNRLLKQTSKTGTFVRTLQMDKVEQSYPGRSHYYWDEDSGLLFLKLKAQNEREKFAFCSMKGCERIKIKALLPRNAGISDCTATAYPRFTERAIVDVPMPRKLFGAQLKTKDHFLEVKMESSRQHFFHLRNDFAYIEVDGRRYPCSEDGIQIVVIDGSRGHVVSHGSFRNAILQGIPWQLFNYVAAIPDNSIVLMASKGRYITRGPWTRVLEKLGADKGLKLKEKMAFVGFKGSFRPIWVTLETEDHKAKIFQVVPIPVVRKKKL.

Residues 1–30 (MRASGRHDVSLKIVLATGCLLLANFSGASS) form the signal peptide. The G8 domain maps to 44–166 (QPWSPGHNRD…KKLSWTFLNK (123 aa)). Asn-119, Asn-165, Asn-312, and Asn-420 each carry an N-linked (GlcNAc...) asparagine glycan. The region spanning 176–317 (GGYFFERSWG…GEHFNVSSSS (142 aa)) is the GG-type lectin 1 domain. A necessary for its endoplasmic reticulum (ER) retention and interaction with HSPA5 region spans residues 295-591 (AAARVFKLFQ…IHHTFSRCIT (297 aa)). PbH1 repeat units follow at residues 572–594 (DPPT…TVHG), 595–617 (SNGL…FTED), 719–741 (IPLG…IIDN), and 798–819 (GGDV…TLAS). 2 N-linked (GlcNAc...) asparagine glycosylation sites follow: Asn-889 and Asn-921. The GG-type lectin 2 domain occupies 1227–1361 (NDFAYIEVDG…PIPVVRKKKL (135 aa)).

The protein belongs to the CEMIP family. As to quaternary structure, interacts with EPHA2 and ITPR3. Interacts with HSPA5/BIP; the interaction induces calcium leakage from the endoplasmic reticulum and cell migration. Interacts with clathrin heavy chain/CLTC. In terms of processing, N-glycosylated; glycosylation is not necessary for HA-binding. As to expression, expressed in Deiters' cells and various supporting cells in the organ of Corti including inner phalangeal, border, inner and outer pillar cells (at protein level). Weakly expressed in brain and testis. In ear, it is specifically expressed in inner ear. Expressed in Deiters' cells in the organ of Corti at P0 (postnatal day zero) before the onset of hearing, but disappears by day P7. Also expressed in fibrocytes of the spiral ligament and the spiral limbus through to P21, when the cochlea matures.

Its subcellular location is the nucleus. It is found in the cytoplasm. The protein localises to the endoplasmic reticulum. The protein resides in the cell membrane. It localises to the membrane. Its subcellular location is the clathrin-coated pit. It is found in the secreted. It catalyses the reaction Random hydrolysis of (1-&gt;4)-linkages between N-acetyl-beta-D-glucosamine and D-glucuronate residues in hyaluronate.. Its activity is regulated as follows. Activity is up-regulated by histamine. Mediates depolymerization of hyaluronic acid (HA) via the cell membrane-associated clathrin-coated pit endocytic pathway. Binds to hyaluronic acid. Hydrolyzes high molecular weight hyaluronic acid to produce an intermediate-sized product, a process that may occur through rapid vesicle endocytosis and recycling without intracytoplasmic accumulation or digestion in lysosomes. Involved in hyaluronan catabolism in the dermis of the skin and arthritic synovium. Positively regulates epithelial-mesenchymal transition (EMT), and hence tumor cell growth, invasion and cancer dissemination. In collaboration with HSPA5/BIP, promotes cancer cell migration in a calcium and PKC-dependent manner. May be involved in hearing. The chain is Cell migration-inducing and hyaluronan-binding protein (Cemip) from Mus musculus (Mouse).